The chain runs to 189 residues: Ribosome maturation factor RimP (189 aa).

This sequence belongs to the RimP family.

It is found in the cytoplasm. Functionally, required for maturation of 30S ribosomal subunits. This is Ribosome maturation factor RimP from Mycobacteroides abscessus (strain ATCC 19977 / DSM 44196 / CCUG 20993 / CIP 104536 / JCM 13569 / NCTC 13031 / TMC 1543 / L948) (Mycobacterium abscessus).